A 261-amino-acid chain; its full sequence is 4-hydroxy-tetrahydrodipicolinate reductase (261 aa).

An NAD(+)-binding site is contributed by 9–14 (GCLGRM). Position 36 (Arg36) interacts with NADP(+). Residues 97–99 (GTT) and 118–121 (SANM) each bind NAD(+). His151 serves as the catalytic Proton donor/acceptor. His152 provides a ligand contact to (S)-2,3,4,5-tetrahydrodipicolinate. The Proton donor role is filled by Lys155. 161–162 (GT) provides a ligand contact to (S)-2,3,4,5-tetrahydrodipicolinate.

This sequence belongs to the DapB family.

It localises to the cytoplasm. The enzyme catalyses (S)-2,3,4,5-tetrahydrodipicolinate + NAD(+) + H2O = (2S,4S)-4-hydroxy-2,3,4,5-tetrahydrodipicolinate + NADH + H(+). It catalyses the reaction (S)-2,3,4,5-tetrahydrodipicolinate + NADP(+) + H2O = (2S,4S)-4-hydroxy-2,3,4,5-tetrahydrodipicolinate + NADPH + H(+). It participates in amino-acid biosynthesis; L-lysine biosynthesis via DAP pathway; (S)-tetrahydrodipicolinate from L-aspartate: step 4/4. Catalyzes the conversion of 4-hydroxy-tetrahydrodipicolinate (HTPA) to tetrahydrodipicolinate. The chain is 4-hydroxy-tetrahydrodipicolinate reductase from Wolbachia sp. subsp. Drosophila simulans (strain wRi).